The following is a 172-amino-acid chain: ATP synthase subunit b (172 aa).

Residues 11-30 (LIAQIINFVIVLWVLNRFAF) form a helical membrane-spanning segment.

Belongs to the ATPase B chain family. F-type ATPases have 2 components, F(1) - the catalytic core - and F(0) - the membrane proton channel. F(1) has five subunits: alpha(3), beta(3), gamma(1), delta(1), epsilon(1). F(0) has three main subunits: a(1), b(2) and c(10-14). The alpha and beta chains form an alternating ring which encloses part of the gamma chain. F(1) is attached to F(0) by a central stalk formed by the gamma and epsilon chains, while a peripheral stalk is formed by the delta and b chains.

Its subcellular location is the cell inner membrane. Its function is as follows. F(1)F(0) ATP synthase produces ATP from ADP in the presence of a proton or sodium gradient. F-type ATPases consist of two structural domains, F(1) containing the extramembraneous catalytic core and F(0) containing the membrane proton channel, linked together by a central stalk and a peripheral stalk. During catalysis, ATP synthesis in the catalytic domain of F(1) is coupled via a rotary mechanism of the central stalk subunits to proton translocation. Component of the F(0) channel, it forms part of the peripheral stalk, linking F(1) to F(0). The chain is ATP synthase subunit b from Methylacidiphilum infernorum (isolate V4) (Methylokorus infernorum (strain V4)).